The following is a 460-amino-acid chain: Chromosomal replication initiator protein DnaA (460 aa).

A domain I, interacts with DnaA modulators region spans residues Met-1–Ala-84. The tract at residues Ala-84–Ser-123 is domain II. Residues Asn-124 to Ala-340 form a domain III, AAA+ region region. The ATP site is built by Gly-168, Gly-170, Lys-171, and Thr-172. Residues Asn-341–Ser-460 are domain IV, binds dsDNA.

It belongs to the DnaA family. Oligomerizes as a right-handed, spiral filament on DNA at oriC.

The protein resides in the cytoplasm. Plays an essential role in the initiation and regulation of chromosomal replication. ATP-DnaA binds to the origin of replication (oriC) to initiate formation of the DNA replication initiation complex once per cell cycle. Binds the DnaA box (a 9 base pair repeat at the origin) and separates the double-stranded (ds)DNA. Forms a right-handed helical filament on oriC DNA; dsDNA binds to the exterior of the filament while single-stranded (ss)DNA is stabiized in the filament's interior. The ATP-DnaA-oriC complex binds and stabilizes one strand of the AT-rich DNA unwinding element (DUE), permitting loading of DNA polymerase. After initiation quickly degrades to an ADP-DnaA complex that is not apt for DNA replication. Binds acidic phospholipids. This is Chromosomal replication initiator protein DnaA from Shewanella sp. (strain MR-7).